The primary structure comprises 232 residues: Putative N-acetylmannosamine-6-phosphate 2-epimerase (232 aa).

This sequence belongs to the NanE family.

It catalyses the reaction an N-acyl-D-glucosamine 6-phosphate = an N-acyl-D-mannosamine 6-phosphate. It functions in the pathway amino-sugar metabolism; N-acetylneuraminate degradation; D-fructose 6-phosphate from N-acetylneuraminate: step 3/5. Its function is as follows. Converts N-acetylmannosamine-6-phosphate (ManNAc-6-P) to N-acetylglucosamine-6-phosphate (GlcNAc-6-P). The sequence is that of Putative N-acetylmannosamine-6-phosphate 2-epimerase from Corynebacterium glutamicum (strain R).